The following is a 302-amino-acid chain: Sulfate adenylyltransferase subunit 2 (302 aa).

A disordered region spans residues 280–302 (RQGRLIDSDQSASMEQKKRQGYF).

This sequence belongs to the PAPS reductase family. CysD subfamily. As to quaternary structure, heterodimer composed of CysD, the smaller subunit, and CysN.

The catalysed reaction is sulfate + ATP + H(+) = adenosine 5'-phosphosulfate + diphosphate. The protein operates within sulfur metabolism; hydrogen sulfide biosynthesis; sulfite from sulfate: step 1/3. In terms of biological role, with CysN forms the ATP sulfurylase (ATPS) that catalyzes the adenylation of sulfate producing adenosine 5'-phosphosulfate (APS) and diphosphate, the first enzymatic step in sulfur assimilation pathway. APS synthesis involves the formation of a high-energy phosphoric-sulfuric acid anhydride bond driven by GTP hydrolysis by CysN coupled to ATP hydrolysis by CysD. The polypeptide is Sulfate adenylyltransferase subunit 2 (Shewanella baltica (strain OS185)).